Here is a 104-residue protein sequence, read N- to C-terminus: Urease subunit beta (104 aa).

This sequence belongs to the urease beta subunit family. Heterotrimer of UreA (gamma), UreB (beta) and UreC (alpha) subunits. Three heterotrimers associate to form the active enzyme.

Its subcellular location is the cytoplasm. The enzyme catalyses urea + 2 H2O + H(+) = hydrogencarbonate + 2 NH4(+). The protein operates within nitrogen metabolism; urea degradation; CO(2) and NH(3) from urea (urease route): step 1/1. This is Urease subunit beta from Rhodopseudomonas palustris (strain BisB18).